The sequence spans 107 residues: DNA polymerase delta subunit 4 (107 aa).

A PCNA-interaction protein motif (PIP box) motif is present at residues 1–16 (MGRKRLITDSYPVVKR). Residues 1-35 (MGRKRLITDSYPVVKRREGSAGHSKGELAPDLGEE) are disordered. Positions 15-28 (KRREGSAGHSKGEL) are enriched in basic and acidic residues.

The protein belongs to the DNA polymerase delta subunit 4 family. Component of the tetrameric DNA polymerase delta complex (Pol-delta4), which consists of POLD1/p125, POLD2/p50, POLD3/p66/p68 and POLD4/p12, with POLD1 bearing DNA polymerase and 3' to 5' proofreading exonuclease activities. Within this complex, directly interacts with POLD1 and POLD2. Directly interacts with PCNA, as do POLD1 and POLD3; this interaction stimulates Pol-delta4 polymerase activity. As POLD1 and POLD2, directly interacts with WRNIP1; this interaction stimulates DNA polymerase delta-mediated DNA synthesis, independently of the presence of PCNA, possibly by increasing initiation frequency. Upon genotoxic stress induced by DNA damaging agents or by replication stress, POLD4 is proteolytically degraded and Pol-delta4 is converted into a trimeric form of the complex (Pol-delta3) that has an increased proofreading activity. The DNA polymerase delta complex interacts with POLDIP2; this interaction is probably mediated through direct binding to POLD2. Post-translationally, ubiquitinated; undergoes 'Lys-48'-linked ubiquitination in response to UV irradiation, leading to proteasomal degradation. This modification is partly mediated by RNF8 and by the DCX(DTL) E3 ubiquitin ligase complex (also called CRL4(CDT2)). Efficient degradation requires the presence of PCNA and is required for the inhibition of fork progression after DNA damage.

Its subcellular location is the nucleus. Its function is as follows. As a component of the tetrameric DNA polymerase delta 4 complex (Pol-delta4), plays a role in high fidelity genome replication and repair. Within this complex, increases the rate of DNA synthesis and decreases fidelity by regulating POLD1 polymerase and proofreading 3' to 5' exonuclease activity. Pol-delta4 participates in Okazaki fragment processing, through both the short flap pathway, as well as a nick translation system. Under conditions of DNA replication stress, required for the repair of broken replication forks through break-induced replication (BIR), a mechanism that may induce segmental genomic duplications of up to 200 kb. Involved in Pol-delta4 translesion synthesis (TLS) of templates carrying O6-methylguanine or abasic sites. Its degradation in response to DNA damage is required for the inhibition of fork progression and cell survival. The sequence is that of DNA polymerase delta subunit 4 (POLD4) from Bos taurus (Bovine).